A 468-amino-acid polypeptide reads, in one-letter code: 3-isopropylmalate dehydratase large subunit (468 aa).

[4Fe-4S] cluster is bound by residues Cys345, Cys405, and Cys408.

The protein belongs to the aconitase/IPM isomerase family. LeuC type 1 subfamily. Heterodimer of LeuC and LeuD. [4Fe-4S] cluster serves as cofactor.

It carries out the reaction (2R,3S)-3-isopropylmalate = (2S)-2-isopropylmalate. It functions in the pathway amino-acid biosynthesis; L-leucine biosynthesis; L-leucine from 3-methyl-2-oxobutanoate: step 2/4. Its function is as follows. Catalyzes the isomerization between 2-isopropylmalate and 3-isopropylmalate, via the formation of 2-isopropylmaleate. The polypeptide is 3-isopropylmalate dehydratase large subunit (Oceanobacillus iheyensis (strain DSM 14371 / CIP 107618 / JCM 11309 / KCTC 3954 / HTE831)).